The primary structure comprises 291 residues: Tumor necrosis factor ligand superfamily member 10 (291 aa).

At 1–17 the chain is on the cytoplasmic side; sequence MPSSGALKDLSFSQHFR. Residues 18–38 form a helical; Signal-anchor for type II membrane protein membrane-spanning segment; sequence MMVICIVLLQVLLQAVSVAVT. The Extracellular segment spans residues 39–291; that stretch reads YMYFTNEMKQ…ASFFGAFLIN (253 aa). N52 carries an N-linked (GlcNAc...) asparagine glycan. The region spanning 126–290 is the THD domain; it reads VAAHITGITR…EASFFGAFLI (165 aa). C240 contributes to the Zn(2+) binding site.

It belongs to the tumor necrosis factor family. As to quaternary structure, homotrimer. One TNFSF10 homotrimer interacts with three TNFSF10A mononers. One TNFSF10 homotrimer interacts with three TNFSF10B mononers. Post-translationally, tyrosine phosphorylated by PKDCC/VLK. Widespread.

The protein localises to the cell membrane. The protein resides in the secreted. In terms of biological role, cytokine that binds to TNFRSF10A/TRAILR1, TNFRSF10B/TRAILR2, TNFRSF10C/TRAILR3, TNFRSF10D/TRAILR4 and possibly also to TNFRSF11B/OPG. Induces apoptosis. Its activity may be modulated by binding to the decoy receptors TNFRSF10C/TRAILR3, TNFRSF10D/TRAILR4 and TNFRSF11B/OPG that cannot induce apoptosis. The polypeptide is Tumor necrosis factor ligand superfamily member 10 (Tnfsf10) (Mus musculus (Mouse)).